A 980-amino-acid polypeptide reads, in one-letter code: Exportin-T (980 aa).

The protein belongs to the exportin family. Expressed in roots, stems, leaves, flowers and embryos.

It is found in the nucleus. The protein localises to the cytoplasm. Probable tRNA nucleus export receptor which regulates tRNA processing and facilitates tRNA translocation across the nuclear pore complex. Is required for correct leaf initiation at different developmental stages and may play a role in floral patterning. In Oryza sativa subsp. japonica (Rice), this protein is Exportin-T.